We begin with the raw amino-acid sequence, 79 residues long: Conotoxin PnMSGL-03 (79 aa).

The signal sequence occupies residues 1–20 (MSRLGIMVLTLLLLVFIVTS). The propeptide occupies 21-44 (HQDAGEKQATQRDAINFRWRRSLI). 3 disulfides stabilise this stretch: Cys52–Cys64, Cys56–Cys73, and Cys63–Cys77. Leu78 bears the Leucine amide mark.

This sequence belongs to the conotoxin O3 superfamily. In terms of tissue distribution, expressed by the venom duct.

Its subcellular location is the secreted. The chain is Conotoxin PnMSGL-03 from Conus pennaceus (Feathered cone).